An 84-amino-acid chain; its full sequence is Small ribosomal subunit protein uS17 (84 aa).

The protein belongs to the universal ribosomal protein uS17 family. Part of the 30S ribosomal subunit.

Functionally, one of the primary rRNA binding proteins, it binds specifically to the 5'-end of 16S ribosomal RNA. The chain is Small ribosomal subunit protein uS17 from Clostridium kluyveri (strain NBRC 12016).